The primary structure comprises 1417 residues: DNA-directed RNA polymerase subunit beta' (1417 aa).

Zn(2+) contacts are provided by C68, C70, C83, and C86. 3 residues coordinate Mg(2+): D458, D460, and D462. The Zn(2+) site is built by C811, C884, C891, and C894.

Belongs to the RNA polymerase beta' chain family. As to quaternary structure, the RNAP catalytic core consists of 2 alpha, 1 beta, 1 beta' and 1 omega subunit. When a sigma factor is associated with the core the holoenzyme is formed, which can initiate transcription. Mg(2+) is required as a cofactor. It depends on Zn(2+) as a cofactor.

The enzyme catalyses RNA(n) + a ribonucleoside 5'-triphosphate = RNA(n+1) + diphosphate. DNA-dependent RNA polymerase catalyzes the transcription of DNA into RNA using the four ribonucleoside triphosphates as substrates. The protein is DNA-directed RNA polymerase subunit beta' of Francisella tularensis subsp. novicida (strain U112).